Consider the following 383-residue polypeptide: Ovalbumin (383 aa).

An N-acetylglycine modification is found at glycine 2. A signal peptide (not cleaved) is located at residues 22–48 (HHANDNMLYSPFAILSTLAMVFLGAKD). At serine 69 the chain carries Phosphoserine. Residues cysteine 74 and cysteine 121 are joined by a disulfide bond. Residues asparagine 293 and asparagine 312 are each glycosylated (N-linked (GlcNAc...) asparagine). Serine 345 carries the post-translational modification Phosphoserine.

Belongs to the serpin family. Ov-serpin subfamily. The signal sequence is not cleaved. The functional signal for membrane translocation of ovalbumin becomes accessible when the nascent chain is 50 to 60 residues long. The hydrophobic sequence which lies between residues 27 and 43 folds back on the preceding residues to form an amphipathic hairpin structure which is the signal element recognized by the membrane. In terms of tissue distribution, major protein of egg white.

It localises to the secreted. Its function is as follows. Storage protein of egg white. Lack protease inhibitory activity. This is Ovalbumin (SERPINB14) from Coturnix japonica (Japanese quail).